Here is a 514-residue protein sequence, read N- to C-terminus: GTPase Obg (514 aa).

The 158-residue stretch at 2 to 159 (ATFVDRVTVH…GDILLELKTV (158 aa)) folds into the Obg domain. The disordered stretch occupies residues 62-88 (RRPHRSSGNGGFGMGDHRSGHTGEDLE). The segment covering 76–85 (GDHRSGHTGE) has biased composition (basic and acidic residues). One can recognise an OBG-type G domain in the interval 160–336 (ADIALVGYPS…LSFALAELVE (177 aa)). GTP-binding positions include 166 to 173 (GYPSAGKS), 191 to 195 (FTTLH), 212 to 215 (DVPG), 288 to 291 (NKID), and 317 to 319 (STV). Residues Ser173 and Thr193 each coordinate Mg(2+). The 85-residue stretch at 356-440 (PKTVDDSGFV…ENGVVFDWEP (85 aa)) folds into the OCT domain.

This sequence belongs to the TRAFAC class OBG-HflX-like GTPase superfamily. OBG GTPase family. In terms of assembly, monomer. The cofactor is Mg(2+).

Its subcellular location is the cytoplasm. Functionally, an essential GTPase which binds GTP, GDP and possibly (p)ppGpp with moderate affinity, with high nucleotide exchange rates and a fairly low GTP hydrolysis rate. Plays a role in control of the cell cycle, stress response, ribosome biogenesis and in those bacteria that undergo differentiation, in morphogenesis control. The chain is GTPase Obg from Leifsonia xyli subsp. xyli (strain CTCB07).